The primary structure comprises 224 residues: 4-aminobenzoate synthase (224 aa).

Glu-77, His-84, Glu-138, His-169, Asp-173, and His-176 together coordinate Fe(2+).

This sequence belongs to the CADD family. As to quaternary structure, homodimer. Fe(2+) is required as a cofactor. Mn(2+) serves as cofactor.

Functionally, involved in de novo para-aminobenzoate (PABA) biosynthesis. Acts as a self-sacrificing or 'suicide' enzyme that utilizes its own active site tyrosine residue(s) as the substrate for PABA synthesis. The side chain of the tyrosine residue is released from the protein backbone via cleavage of the C(alpha)-C(beta) bond, leaving a glycine in place of the original tyrosine residue. Reaction requires O(2) and a reduced dimetal cofactor. The protein is 4-aminobenzoate synthase of Chlamydia pneumoniae (Chlamydophila pneumoniae).